The sequence spans 49 residues: Small, acid-soluble spore protein O (49 aa).

Residues 1–49 are disordered; it reads MGKRKANHTISGMNAASAQGQGAGYNEEFANENLTPAERQNNKKRKKNQ. Positions 8–20 are enriched in polar residues; that stretch reads HTISGMNAASAQG.

It belongs to the SspO family.

The protein resides in the spore core. This chain is Small, acid-soluble spore protein O, found in Bacillus anthracis (strain A0248).